The following is a 482-amino-acid chain: MLDVPLLIGGQSCPARDGRTFERRNPVTGELVSRVAAATLEDADAAVAAAQQAFPAWAALAPNERRSRLLKAAEQLQARSGEFIEAAGETGAMANWYGFNVRLAANMLREAASMTTQVNGEVIPSDVPGSFAMALRQPCGVVLGIAPWNAPVILATRAIAMPLACGNTVVLKASELSPAVHRLIGQVLQDAGLGDGVVNVISNAPADAAQIVERLIANPAVRRVNFTGSTHVGRIVGELSARHLKPALLELGGKAPLLVLDDADLEAAVQAAAFGAYFNQGQICMSTERLIVDAKVADAFVAQLAAKVETLRAGDPADPESVLGSLVDASAGTRIKALIDDAVAKGARLVIGGQLEGSILQPTLLDGVDASMRLYREESFGPVAVVLRGEGEEALLQLANDSEFGLSAAIFSRDTGRALALAQRVESGICHINGPTVHDEAQMPFGGVKSSGYGSFGGKASIEHFTQLRWVTLQNGPRHYPI.

An NAD(+)-binding site is contributed by 228 to 233 (GSTHVG). Residues Glu250 and Cys284 contribute to the active site.

The protein belongs to the aldehyde dehydrogenase family.

It catalyses the reaction vanillin + NAD(+) + H2O = vanillate + NADH + 2 H(+). Its function is as follows. Catalyzes the NAD-dependent oxidation of vanillin to vanillic acid. This chain is Vanillin dehydrogenase (vdh), found in Pseudomonas fluorescens.